A 384-amino-acid polypeptide reads, in one-letter code: Cobalt-precorrin-5B C(1)-methyltransferase (384 aa).

The protein belongs to the CbiD family.

It carries out the reaction Co-precorrin-5B + S-adenosyl-L-methionine = Co-precorrin-6A + S-adenosyl-L-homocysteine. It functions in the pathway cofactor biosynthesis; adenosylcobalamin biosynthesis; cob(II)yrinate a,c-diamide from sirohydrochlorin (anaerobic route): step 6/10. Catalyzes the methylation of C-1 in cobalt-precorrin-5B to form cobalt-precorrin-6A. This is Cobalt-precorrin-5B C(1)-methyltransferase from Marinomonas sp. (strain MWYL1).